The chain runs to 414 residues: Arrestin domain-containing protein 3 (414 aa).

2 short sequence motifs (PPxY motif) span residues 346-349 (PPSY) and 391-394 (PPLY). The disordered stretch occupies residues 393–414 (LYSEIDPNPDQSSEDRPSCPSR). Residues 405–414 (SEDRPSCPSR) are compositionally biased toward basic and acidic residues.

This sequence belongs to the arrestin family. As to quaternary structure, interacts (via PPxY motifs) with NEDD4 (via WW domains). Interacts with ADRB2. Interacts with ADRB3. Interacts with HGS (via PPxY motifs). Does not bind TXN (thioredoxin). Interacts with ITCH. In terms of tissue distribution, detected in visceral fat, subcutaneous fat, brown fat and skeletal muscle, and at lower levels in kidney.

It is found in the cytoplasm. It localises to the cell membrane. The protein localises to the lysosome. The protein resides in the endosome. Its subcellular location is the early endosome. Adapter protein that plays a role in regulating cell-surface expression of adrenergic receptors and probably also other G protein-coupled receptors. Plays a role in NEDD4-mediated ubiquitination and endocytosis af activated ADRB2 and subsequent ADRB2 degradation. May recruit NEDD4 to ADRB2. Alternatively, may function as adapter protein that does not play a major role in recruiting NEDD4 to ADRB2, but rather plays a role in a targeting ADRB2 to endosomes. This Mus musculus (Mouse) protein is Arrestin domain-containing protein 3 (Arrdc3).